The following is a 275-amino-acid chain: Large ribosomal subunit protein uL2 (275 aa).

2 disordered regions span residues 28-54 (APHA…TRHI) and 223-275 (VAMN…RNKK).

The protein belongs to the universal ribosomal protein uL2 family. Part of the 50S ribosomal subunit. Forms a bridge to the 30S subunit in the 70S ribosome.

One of the primary rRNA binding proteins. Required for association of the 30S and 50S subunits to form the 70S ribosome, for tRNA binding and peptide bond formation. It has been suggested to have peptidyltransferase activity; this is somewhat controversial. Makes several contacts with the 16S rRNA in the 70S ribosome. The sequence is that of Large ribosomal subunit protein uL2 from Saccharophagus degradans (strain 2-40 / ATCC 43961 / DSM 17024).